Here is a 478-residue protein sequence, read N- to C-terminus: MHTMNKTAESVWDNCLSFIKDNIQEQAYKTWFEPIKSVELTDNALYIQVPSKFFYEWLEEHYVKLLKVALTKELGKNAKLLYKIKMENTYGNKLPFTEQLPSAHRSPVRTQEIDVPVQQKNPELRNPFIIPGIRNLKIESQLNANYSFDNFLEGDSNRLARSAGMAVANKPGGTSFNPLLIFGGVGLGKTHLAHAIGVEVKEKYPEKTVLYISAEIFTQQYIESVKKNNRNDFIHFYQLIDVLIIDDVQFLSGKTGTQDVFFHIFNYLHQNGKQVILTSDKAPVDMQDIEQRLLSRFKWGLSAEIHQPDYETRISILKNILYRDGVEMPEEIIEYVARNIKSNVRELEGAIISLIAQSSFNKKEVTLELAKQVVEKFVKNVKREVSIDYIQKVVSDYFQLDLEVLQSKTRKRHVVQARQLAMFFAKRYTKASLANIGSQIGDRDHATVLHACKTVDNLVTTDKQFKKFVDDINKKLSL.

The domain I, interacts with DnaA modulators stretch occupies residues Met1–Tyr82. Residues Tyr82 to Ser140 are domain II. The segment at Gln141–Ser358 is domain III, AAA+ region. ATP contacts are provided by Gly186, Gly188, Lys189, and Thr190. The tract at residues Ser359–Leu478 is domain IV, binds dsDNA.

The protein belongs to the DnaA family. In terms of assembly, oligomerizes as a right-handed, spiral filament on DNA at oriC.

It is found in the cytoplasm. Functionally, plays an essential role in the initiation and regulation of chromosomal replication. ATP-DnaA binds to the origin of replication (oriC) to initiate formation of the DNA replication initiation complex once per cell cycle. Binds the DnaA box (a 9 base pair repeat at the origin) and separates the double-stranded (ds)DNA. Forms a right-handed helical filament on oriC DNA; dsDNA binds to the exterior of the filament while single-stranded (ss)DNA is stabiized in the filament's interior. The ATP-DnaA-oriC complex binds and stabilizes one strand of the AT-rich DNA unwinding element (DUE), permitting loading of DNA polymerase. After initiation quickly degrades to an ADP-DnaA complex that is not apt for DNA replication. Binds acidic phospholipids. The sequence is that of Chromosomal replication initiator protein DnaA from Flavobacterium psychrophilum (strain ATCC 49511 / DSM 21280 / CIP 103535 / JIP02/86).